Reading from the N-terminus, the 812-residue chain is Protein FAM83G (812 aa).

Alanine 2 is subject to N-acetylalanine. Residues 2-312 (AFSQVQCLDD…LYLMSQSVSL (311 aa)) form a DUF1669 region. Serine 4 is modified (phosphoserine). The interval 76 to 119 (PGSEDPRVSGRRPEPQDNGGADASEETSAAGGPPATETLPSLEY) is disordered. Over residues 79–90 (EDPRVSGRRPEP) the composition is skewed to basic and acidic residues. Phosphoserine occurs at positions 124, 127, and 356. 3 disordered regions span residues 362–389 (KSSS…GDLS), 455–509 (ASAQ…KPRT), and 521–812 (SDIG…HKEP). Over residues 455–467 (ASAQHQLWKQSQG) the composition is skewed to polar residues. Residues 471 to 480 (CPAPCPPPAP) show a composition bias toward pro residues. A compositionally biased stretch (polar residues) spans 545–562 (STASESEVPQQQHSSMTQ). Residues 576–586 (LDEDEDDDDDY) show a composition bias toward acidic residues. Residues 589–598 (LSDQDSLSGS) are compositionally biased toward low complexity. A phosphoserine mark is found at serine 609, serine 613, serine 615, and serine 649. The span at 721–731 (SSSKKASPAAA) shows a compositional bias: low complexity. A compositionally biased stretch (basic and acidic residues) spans 761–772 (LRAELRATEEHA).

This sequence belongs to the FAM83 family. In terms of assembly, interacts with SMAD1 (via MH2 domain); in a SMAD4-independent manner. Directly interacts (via DUF1669) with casein kinase isoforms CSNK1A1 and CSNK1A1L. In terms of processing, BMP signaling induces the phosphorylation by BMPR1A at Ser-609, Ser-613 and Ser-615. Phosphorylation at Ser-609 is necessary for the activation of SMAD4-independent BMP target genes such as NEDD9 and ASNS. Post-translationally, phosphorylated by CSNK1A1.

It localises to the cytoplasm. It is found in the cytosol. The protein localises to the nucleus. Functionally, substrate for type I BMP receptor kinase involved in regulation of some target genes of the BMP signaling pathway. Also regulates the expression of several non-BMP target genes, suggesting a role in other signaling pathways. This chain is Protein FAM83G (Fam83g), found in Mus musculus (Mouse).